The sequence spans 388 residues: Putative O-antigen polymerase (388 aa).

Helical transmembrane passes span 23–43 (IFYP…GYEI), 57–77 (LIFL…TESV), 97–117 (VHNV…MRLS), 143–163 (NFSA…IWSK), 180–200 (IVFI…MVII), 215–235 (VYLI…LRGL), 312–332 (ISAE…GVLW), 338–358 (YISV…IFYH), and 361–381 (FMTN…FSQF).

It localises to the cell inner membrane. Functionally, may function in vitro as a polymerase that catalyzes the polymerization of the O-antigen repeat units on the periplasmic face of the inner membrane, leading to the formation of the lipid-linked O-antigen molecule. However, E.coli K12 strains do not normally produce the O-antigen in vivo due to mutations in the rfb gene cluster. K12 strains are phenotypically rough, their lipopolysaccharide having a complete core structure, but no O-antigen. The polypeptide is Putative O-antigen polymerase (Escherichia coli (strain K12)).